The sequence spans 984 residues: Calsyntenin-1 (984 aa).

Residues 1–18 (MRTAYFIFVGALLGVSYA) form the signal peptide. Over 19–850 (KHHHAARAPI…VGQGAIAGGA (832 aa)) the chain is Extracellular. 2 consecutive Cadherin domains span residues 66–142 (YLLT…APEI) and 143–257 (ENPW…APGV). Residues Asn206 and Asn305 are each glycosylated (N-linked (GlcNAc...) asparagine). The helical transmembrane segment at 851–871 (VAVVVVVCVGFLLVLLVIGVL) threads the bilayer. At 872–984 (KMRDTPMPRR…ISTNARSYRV (113 aa)) the chain is on the cytoplasmic side. Residues 878–959 (MPRRRRQKRQ…QTEVLPHLDA (82 aa)) form a disordered region. Basic and acidic residues predominate over residues 886–896 (RQSDGGMHWDD). The span at 918-951 (EFSDEEEEEETDGESECSYRDEEDDVSEDEEDQT) shows a compositional bias: acidic residues.

Belongs to the calsyntenin family. In terms of assembly, interacts with isoform c of daf-2 (daf-2c); promoting daf-2c localization to synaptic regions. Interacts with klc-2. Interacts with unc-104. A proportion of the protein is proteolytically cleaved before the transmembrane domain in neurons, leading to release in the extracellular space. As to expression, widely expressed in the nervous system. Highly expressed in many head neurons, including most amphid sensory neurons. Also expressed in other tissues, such as intestine and gonadal sheath cells.

It localises to the golgi apparatus membrane. Its subcellular location is the perikaryon. The protein localises to the cell projection. It is found in the axon. The protein resides in the secreted. It localises to the synaptic cleft. Its function is as follows. Cell adhesion molecule involved in associative learning and memory. Acts as a regulator of GABAergic synaptic transmission at neuromuscular junctions by regulating GABA synaptic vesicle precursor transport: possibly functions as a cargo adapter for unc-104-mediated transport of synaptic vesicle precursors. Promotes localization of isoform c of daf-2 (daf-2c) to synaptic regions by acting as a signaling adapter between klc-2 and daf-2c. Acts as aregulator of glutamate signaling in the sensory neurons by inhibiting the activity of command interneurons, thereby negatively regulating motor circuit activity and locomotion. The chain is Calsyntenin-1 from Caenorhabditis elegans.